We begin with the raw amino-acid sequence, 523 residues long: 2-isopropylmalate synthase (523 aa).

A Pyruvate carboxyltransferase domain is found at valine 5 to tryptophan 267. Mn(2+)-binding residues include aspartate 14, histidine 202, histidine 204, and asparagine 238. A regulatory domain region spans residues arginine 392–valine 523.

It belongs to the alpha-IPM synthase/homocitrate synthase family. LeuA type 1 subfamily. As to quaternary structure, homodimer. The cofactor is Mn(2+).

It localises to the cytoplasm. It carries out the reaction 3-methyl-2-oxobutanoate + acetyl-CoA + H2O = (2S)-2-isopropylmalate + CoA + H(+). It participates in amino-acid biosynthesis; L-leucine biosynthesis; L-leucine from 3-methyl-2-oxobutanoate: step 1/4. Its function is as follows. Catalyzes the condensation of the acetyl group of acetyl-CoA with 3-methyl-2-oxobutanoate (2-ketoisovalerate) to form 3-carboxy-3-hydroxy-4-methylpentanoate (2-isopropylmalate). This is 2-isopropylmalate synthase from Escherichia coli O45:K1 (strain S88 / ExPEC).